Here is a 427-residue protein sequence, read N- to C-terminus: Glutamate-1-semialdehyde 2,1-aminomutase (427 aa).

N6-(pyridoxal phosphate)lysine is present on Lys-264.

The protein belongs to the class-III pyridoxal-phosphate-dependent aminotransferase family. HemL subfamily. As to quaternary structure, homodimer. It depends on pyridoxal 5'-phosphate as a cofactor.

It is found in the cytoplasm. The enzyme catalyses (S)-4-amino-5-oxopentanoate = 5-aminolevulinate. It functions in the pathway porphyrin-containing compound metabolism; protoporphyrin-IX biosynthesis; 5-aminolevulinate from L-glutamyl-tRNA(Glu): step 2/2. This Clostridium botulinum (strain Alaska E43 / Type E3) protein is Glutamate-1-semialdehyde 2,1-aminomutase.